The chain runs to 923 residues: MLIFYAKYAFIFWFFVGSNQGEMLLMDKISHDKTLLNVTACTQNCLEKGQMDFRSCLKDCRINGTFPGALRKVQENYQMNMICRTESEIVFQIDWVQHSRGTEPAPNATYIIRVDAVKDDNKETALYLSDDNFLILPGLESNSTHNITALAMHGDGSYSLIAKDQTFATLIRGYQPSKMGAVNLLRFVPQPDDLHHIAAEIEWKPSAESNCYFDMVSYSTNSVNMDEPLEVQFRDRKKLYRHTVDNLEFDKQYHVGVRTVNIMNRLESDLQWLPIAVPSCLDWYPYNYTLCPPHKPENLTVTQKQYLPNILALNITWARPRYLPDNYTLHIFDLFKGGTELNYTLDQNRSHFYVPKITVLGSHFEVHLVAQSAGGKNVSGLTLDKVHRGVLLSEGNMVKLVLFIIVPICCILMLCSLTFCRRNRSEVQALQMDAKDAKASEFHLSLMDSSGLLVTLSANESLEVMDELEVEPHSVLLQDVLGEGAFGLVRRGVYKKRQVAVKLLKDEPNDEDVYAFKCEIQMLKAVGKHPNIVGIVGYSTRFSNQMMLLIEYCSLGSLQNFLREEWKFRQEQNAIGLKKNLEQNVDNRRFNRLPRNSIHDRIEDINNSMLSTVEEESESDQTHSSRCETYTLTRITNAADNKGYGLEDIENIGGSYIPKTAEAPKDRPKRKLKPQPKKDSKQDFKSDNKKRIFENKEYFDCLDSSDTKPRIPLKYADLLDIAQQVAVGMEFLAQNKVVHRDLAARNVLISVDRSIKIADFGLSRDVYHENVYRKSGGSGKLPIKWLALESLTHQVYTSQSDVWSFGVLLYEITTLGGMPYPSVSPSDLLQLLRQGHRMKRPEGCTQEMFSLMESCWSSVPSHRPTFSALKHRLGGMILATNDVPERLKQLQAATESKLKSCDGLNSKVEQVPCEEELYLEPLN.

An N-terminal signal peptide occupies residues 1–20 (MLIFYAKYAFIFWFFVGSNQ). Residues 21–399 (GEMLLMDKIS…VLLSEGNMVK (379 aa)) lie on the Extracellular side of the membrane. N-linked (GlcNAc...) asparagine glycosylation is found at asparagine 37, asparagine 63, asparagine 107, asparagine 142, asparagine 146, asparagine 287, asparagine 298, asparagine 314, asparagine 326, asparagine 342, asparagine 348, and asparagine 377. The helical transmembrane segment at 400–420 (LVLFIIVPICCILMLCSLTFC) threads the bilayer. The Cytoplasmic segment spans residues 421 to 923 (RRNRSEVQAL…EEELYLEPLN (503 aa)). The Protein kinase domain occupies 475 to 874 (VLLQDVLGEG…TFSALKHRLG (400 aa)). ATP-binding positions include 481-489 (LGEGAFGLV) and lysine 502. Serine 608 is subject to Phosphoserine. The disordered stretch occupies residues 656–687 (YIPKTAEAPKDRPKRKLKPQPKKDSKQDFKSD). Over residues 676–687 (PKKDSKQDFKSD) the composition is skewed to basic and acidic residues. Residue aspartate 741 is the Proton acceptor of the active site.

It belongs to the protein kinase superfamily. Tyr protein kinase family. Requires Mg(2+) as cofactor. Post-translationally, may be auto-phosphorylated on tyrosine residues.

Its subcellular location is the membrane. It catalyses the reaction L-tyrosyl-[protein] + ATP = O-phospho-L-tyrosyl-[protein] + ADP + H(+). Its function is as follows. Probable receptor tyrosine kinase which is required for determination of anterior and posterior terminal structures in the embryo. During postembryonic development, involved in the initiation of metamorphosis probably by inducing the production of ecdysone in response to prothoracicotropic hormone Ptth. Binding to Ptth stimulates activation of canonical MAPK signaling leading to ERK phosphorylation. The chain is Tyrosine-protein kinase receptor torso (tor) from Drosophila melanogaster (Fruit fly).